The primary structure comprises 118 residues: MARVKRGVQANRRHKKILKRAKGYYGARSRVYRVAVQAVTKAGQYAYRDRRNKKRTFRRLWIARINAGARLNGLSYSRFINGLKKANIEIDRRVLADIAMHDAAAFTALTEKAKAALA.

It belongs to the bacterial ribosomal protein bL20 family.

Its function is as follows. Binds directly to 23S ribosomal RNA and is necessary for the in vitro assembly process of the 50S ribosomal subunit. It is not involved in the protein synthesizing functions of that subunit. This chain is Large ribosomal subunit protein bL20, found in Psychrobacter sp. (strain PRwf-1).